A 353-amino-acid chain; its full sequence is Methionine import ATP-binding protein MetN (353 aa).

Residues 8-249 enclose the ABC transporter domain; it reads LDQIDVTFHQ…PKQPLTQDFI (242 aa). 42–49 serves as a coordination point for ATP; the sequence is GYSGAGKS.

It belongs to the ABC transporter superfamily. Methionine importer (TC 3.A.1.24) family. The complex is composed of two ATP-binding proteins (MetN), two transmembrane proteins (MetI) and a solute-binding protein (MetQ).

It is found in the cell membrane. It catalyses the reaction L-methionine(out) + ATP + H2O = L-methionine(in) + ADP + phosphate + H(+). The catalysed reaction is D-methionine(out) + ATP + H2O = D-methionine(in) + ADP + phosphate + H(+). Functionally, part of the ABC transporter complex MetNIQ involved in methionine import. Responsible for energy coupling to the transport system. This chain is Methionine import ATP-binding protein MetN, found in Streptococcus pneumoniae (strain ATCC BAA-255 / R6).